Consider the following 312-residue polypeptide: Glycine--tRNA ligase alpha subunit (312 aa).

This sequence belongs to the class-II aminoacyl-tRNA synthetase family. In terms of assembly, tetramer of two alpha and two beta subunits.

The protein localises to the cytoplasm. The enzyme catalyses tRNA(Gly) + glycine + ATP = glycyl-tRNA(Gly) + AMP + diphosphate. This chain is Glycine--tRNA ligase alpha subunit (glyQ), found in Buchnera aphidicola subsp. Acyrthosiphon pisum (strain APS) (Acyrthosiphon pisum symbiotic bacterium).